We begin with the raw amino-acid sequence, 753 residues long: Probable tubulin--tyrosine ligase PBY1 (753 aa).

Positions 343-734 constitute a TTL domain; that stretch reads MEYIYKPLTH…PIFNENRNKT (392 aa).

The protein belongs to the tubulin--tyrosine ligase family. Mg(2+) serves as cofactor. K(+) is required as a cofactor.

The protein resides in the cytoplasm. It is found in the P-body. It carries out the reaction C-terminal L-alpha-aminoacyl-L-glutamyl-L-glutamyl-[tubulin] + L-tyrosine + ATP = C-terminal L-alpha-aminoacyl-L-glutamyl-L-glutamyl-L-tyrosyl-[tubulin] + ADP + phosphate + H(+). Probable P-body-associated tubulin--tyrosine ligase. The protein is Probable tubulin--tyrosine ligase PBY1 (PBY1) of Saccharomyces cerevisiae (strain ATCC 204508 / S288c) (Baker's yeast).